Reading from the N-terminus, the 115-residue chain is Large ribosomal subunit protein bL19 (115 aa).

Belongs to the bacterial ribosomal protein bL19 family.

Its function is as follows. This protein is located at the 30S-50S ribosomal subunit interface and may play a role in the structure and function of the aminoacyl-tRNA binding site. The sequence is that of Large ribosomal subunit protein bL19 from Thermosipho melanesiensis (strain DSM 12029 / CIP 104789 / BI429).